A 239-amino-acid polypeptide reads, in one-letter code: Leucine-rich repeat-containing protein 57 (239 aa).

G2 carries the N-myristoyl glycine lipid modification. LRR repeat units follow at residues 39–60 (NLRT…LIGK), 63–84 (LLKS…ICNL), 86–107 (KLET…FGQL), 109–131 (ALKT…CSLR), 132–153 (HLDV…VGEL), 154–175 (QVIE…ISCC), 177–197 (RLKI…PQSI), and 202–222 (QICL…RELE).

The protein localises to the membrane. The chain is Leucine-rich repeat-containing protein 57 (LRRC57) from Homo sapiens (Human).